We begin with the raw amino-acid sequence, 469 residues long: 3-isopropylmalate dehydratase large subunit (469 aa).

[4Fe-4S] cluster contacts are provided by Cys-349, Cys-410, and Cys-413.

This sequence belongs to the aconitase/IPM isomerase family. LeuC type 1 subfamily. As to quaternary structure, heterodimer of LeuC and LeuD. Requires [4Fe-4S] cluster as cofactor.

It carries out the reaction (2R,3S)-3-isopropylmalate = (2S)-2-isopropylmalate. Its pathway is amino-acid biosynthesis; L-leucine biosynthesis; L-leucine from 3-methyl-2-oxobutanoate: step 2/4. Catalyzes the isomerization between 2-isopropylmalate and 3-isopropylmalate, via the formation of 2-isopropylmaleate. The sequence is that of 3-isopropylmalate dehydratase large subunit from Neisseria meningitidis serogroup A / serotype 4A (strain DSM 15465 / Z2491).